Here is a 210-residue protein sequence, read N- to C-terminus: Probable GTP-binding protein EngB (210 aa).

An EngB-type G domain is found at 25–199 (CGIEVAFAGR…RQKLDSWFSE (175 aa)). Residues 33-40 (GRSNAGKS), 60-64 (GRTQL), 78-81 (DLPG), 145-148 (TKAD), and 178-180 (FSS) each bind GTP. Mg(2+)-binding residues include Ser40 and Thr62.

Belongs to the TRAFAC class TrmE-Era-EngA-EngB-Septin-like GTPase superfamily. EngB GTPase family. Mg(2+) serves as cofactor.

Functionally, necessary for normal cell division and for the maintenance of normal septation. In Salmonella paratyphi C (strain RKS4594), this protein is Probable GTP-binding protein EngB.